A 299-amino-acid polypeptide reads, in one-letter code: DNA-binding transcriptional repressor CapW (299 aa).

Residues 1–15 (MPDNFREGDKQDSQK) are compositionally biased toward basic and acidic residues. Residues 1-21 (MPDNFREGDKQDSQKGRQGAR) form a disordered region. A winged HTH domain region spans residues 1-95 (MPDNFREGDK…LFQPVYMTSS (95 aa)). Positions 96–207 (LECYLNDLLQ…LSRIVQAQNA (112 aa)) are WYL domain. Residues 131–211 (LRRLDTDVVS…VQAQNAGPDE (81 aa)) enclose the WYL domain. The tract at residues 156 to 200 (YQSMSDPQGSKRTLTPHSLVHDGYRWHTRAWCHKRGEYRDFLLSR) is probable ligand-binding region. The segment at 208–299 (GPDEERANGD…KDEIYALLKQ (92 aa)) is WCX domain.

In terms of assembly, homodimer.

Transcriptional regulator of a CBASS antivirus system. CBASS (cyclic oligonucleotide-based antiphage signaling system) provides immunity against bacteriophage. The CD-NTase protein synthesizes cyclic nucleotides in response to infection; these serve as specific second messenger signals. The signals activate a diverse range of effectors, leading to bacterial cell death and thus abortive phage infection. A type III CBASS system. Expression of this CBASS system (Cap18-Cap6-Cap7-CdnC-CapW-Cap17) in a susceptible E.coli (strain MG1655) confers resistance to bacteriophage P1. Binds specifically to and represses expression from the CBASS promoter, found between the genes for divergently transcribed capW and cdnC. This chain is DNA-binding transcriptional repressor CapW, found in Escherichia coli (strain KTE188).